Here is a 553-residue protein sequence, read N- to C-terminus: Undecaprenyl phosphate-alpha-4-amino-4-deoxy-L-arabinose arabinosyl transferase (553 aa).

The next 12 membrane-spanning stretches (helical) occupy residues 8–28 (LVLLLGFTLLYLLPLEFRALW), 83–103 (VRFGAVFSTTLSALMVAWLAF), 111–131 (VAVLSGVIFLTCLLVYGVGTY), 132–152 (AVLDPMITLWLVAAMCSFWLG), 176–196 (VMTKGFLALAVPVLGVLPWVI), 204–224 (VLLFGPLAIISATLITLPWAL), 255–275 (APFWYYIPFLIAGCLPWVALL), 288–308 (IESGTLYLLGWVVMPLLFFSI), 317–337 (ILPCFAPLAILLARHATQLVA), 350–370 (TVFGAVCALIVLLVLAPWGIA), 380–400 (VLKVIQASIAFLVWALVGYLT), and 407–427 (LWQWAALCPLGIALLVGGMIP).

It belongs to the glycosyltransferase 83 family.

Its subcellular location is the cell inner membrane. It catalyses the reaction 4-amino-4-deoxy-alpha-L-arabinopyranosyl di-trans,octa-cis-undecaprenyl phosphate + lipid IVA = lipid IIA + di-trans,octa-cis-undecaprenyl phosphate.. The protein operates within lipopolysaccharide metabolism; 4-amino-4-deoxy-beta-L-arabinose-lipid A biosynthesis. Catalyzes the transfer of the L-Ara4N moiety of the glycolipid undecaprenyl phosphate-alpha-L-Ara4N to lipid A. The modified arabinose is attached to lipid A and is required for resistance to polymyxin and cationic antimicrobial peptides. This Enterobacter sp. (strain 638) protein is Undecaprenyl phosphate-alpha-4-amino-4-deoxy-L-arabinose arabinosyl transferase.